Reading from the N-terminus, the 857-residue chain is Major vault protein (857 aa).

8 MVP repeats span residues 18–60 (PYYY…ITIP), 62–122 (RHYC…KVVQ), 123–174 (ANAA…TIIR), 175–227 (PNQA…YVLT), 228–282 (EKNA…NTLT), 284–332 (RQYC…FILG), 333–387 (EDEG…IPLD), and 388–441 (ENEG…VAER). The tract at residues 434-453 (AKDPVAERSDRRGDRAAPRA) is disordered. Positions 437–453 (PVAERSDRRGDRAAPRA) are enriched in basic and acidic residues. The IQ domain occupies 665–694 (ARHEAERLEQEARGRLERQKIMDEAEAEKS).

As to quaternary structure, the vault ribonucleoprotein particle is a huge (400 A x 670 A) cage structure of 12.9 MDa. It consists of a dimer of half-vaults, with each half-vault comprising 39 identical major vault protein (MVP) chains, PARP4 and one or more vault RNAs (vRNAs). In terms of tissue distribution, expressed in embryos, tube feet and coelomocytes (at protein level). Not expressed in sperm cells (at protein level).

It localises to the cytoplasm. The protein localises to the nucleus. Its function is as follows. Required for normal vault structure. Vaults are multi-subunit structures that may act as scaffolds for proteins involved in signal transduction. Vaults may also play a role in nucleo-cytoplasmic transport. The chain is Major vault protein from Strongylocentrotus purpuratus (Purple sea urchin).